The primary structure comprises 255 residues: Hydroxyacylglutathione hydrolase (255 aa).

Zn(2+) contacts are provided by histidine 52, histidine 54, aspartate 56, histidine 57, histidine 109, aspartate 126, and histidine 166.

The protein belongs to the metallo-beta-lactamase superfamily. Glyoxalase II family. As to quaternary structure, monomer. Requires Zn(2+) as cofactor.

The enzyme catalyses an S-(2-hydroxyacyl)glutathione + H2O = a 2-hydroxy carboxylate + glutathione + H(+). Its pathway is secondary metabolite metabolism; methylglyoxal degradation; (R)-lactate from methylglyoxal: step 2/2. Its function is as follows. Thiolesterase that catalyzes the hydrolysis of S-D-lactoyl-glutathione to form glutathione and D-lactic acid. This Anaeromyxobacter dehalogenans (strain 2CP-C) protein is Hydroxyacylglutathione hydrolase.